We begin with the raw amino-acid sequence, 198 residues long: Cyclin-dependent kinase inhibitor 1B (198 aa).

Residues 1–11 are compositionally biased toward polar residues; sequence MSNVRVSNGSP. A disordered region spans residues 1 to 34; the sequence is MSNVRVSNGSPSLERMDARQAEHPKPSACRNLFG. Phosphoserine; by UHMK1 is present on serine 10. The segment covering 14 to 25 has biased composition (basic and acidic residues); sequence ERMDARQAEHPK. Residues 51-91 are interaction with CDK2; that stretch reads DMEEASQRKWNFDFQNHKPLEGKYEWQEVEKGSLPEFYYRP. Phosphotyrosine; by SRC is present on tyrosine 74. Positions 85–198 are disordered; sequence PEFYYRPPRP…KKPGLRRRQT (114 aa). Tyrosine 88 bears the Phosphotyrosine; by ABL, LYN, SRC and JAK2 mark. At tyrosine 89 the chain carries Phosphotyrosine. A compositionally biased stretch (basic and acidic residues) spans 126-137; the sequence is EDTHLVDPKTDP. The short motif at 153 to 169 is the Nuclear localization signal element; the sequence is KRPATDDSSTQNKRANR. Threonine 157 carries the phosphothreonine; by CaMK1, PKB/AKT1 and PIM1 modification. Threonine 170 carries the post-translational modification Phosphothreonine. A compositionally biased stretch (polar residues) spans 175-186; that stretch reads SDGSPNAGSVEQ. The residue at position 187 (threonine 187) is a Phosphothreonine; by PKB/AKT1, CDK1 and CDK2. Position 198 is a phosphothreonine; by CaMK1, PKB/AKT1, RPS6KA1, RPS6KA3 and PIM1 (threonine 198).

The protein belongs to the CDI family. As to quaternary structure, forms a ternary complex composed of CCNE1, CDK2 and CDKN1B. Interacts directly with CCNE1; the interaction is inhibited by CDK2-dependent phosphorylation on Thr-187. Interacts with COPS5, subunit of the COP9 signalosome complex; the interaction leads to CDKN1B degradation. Interacts with NUP50; the interaction leads to nuclear import and degradation of phosphorylated CDKN1B. Interacts with CCND1 and SNX6. Interacts (Thr-198-phosphorylated form) with 14-3-3 proteins, binds strongly YWHAQ, weakly YWHAE and YWHAH, but not YWHAB nor YWHAZ; the interaction with YWHAQ results in translocation to the cytoplasm. Interacts with AKT1 and LYN; the interactions lead to cytoplasmic mislocation, phosphorylation of CDKN1B and inhibition of cell cycle arrest. Forms a ternary complex with CCNA2 and CDK2; CDKN1B inhibits the kinase activity of CDK2 through conformational rearrangements. Interacts (unphosphorylated form) with CDK2. Forms a complex with CDK2 and SPDYA, but does not directly interact with SPDYA. Forms a ternary complex composed of cyclin D, CDK4 and CDKN1B. Interacts (phosphorylated on Tyr-88 and Tyr-89) with CDK4; the interaction is required for cyclin D and CDK4 complex assembly, induces nuclear translocation and activates the CDK4 kinase activity. Interacts with GRB2. Interacts with PIM1. Identified in a complex with SKP1, SKP2 and CKS1B. Interacts with UHMK1; the interaction leads to cytoplasmic mislocation, phosphorylation of CDKN1B and inhibition of cell cycle arrest. Also interacts with CDK1. Dephosphorylated on Thr-187 by PPM1H, leading to CDKN1B stability. Interacts with HSPA8; the interaction may be associated with susceptibility to ubiquitination. In terms of processing, phosphorylated; phosphorylation occurs on serine, threonine and tyrosine residues. Phosphorylation on Ser-10 is the major site of phosphorylation in resting cells, takes place at the G(0)-G(1) phase and leads to protein stability. Phosphorylation on other sites is greatly enhanced by mitogens, growth factors, cMYC and in certain cancer cell lines. The phosphorylated form found in the cytoplasm is inactivate. Phosphorylation on Thr-198 is required for interaction with 14-3-3 proteins. Phosphorylation on Thr-187, by CDK1 and CDK2 leads to protein ubiquitination and proteasomal degradation. Tyrosine phosphorylation promotes this process. Phosphorylation by PKB/AKT1 can be suppressed by LY294002, an inhibitor of the catalytic subunit of PI3K. Phosphorylation on Tyr-88 and Tyr-89 has no effect on binding CDK2, but is required for binding CDK4. Dephosphorylated on tyrosine residues by G-CSF. Post-translationally, ubiquitinated; in the cytoplasm by the KPC complex (composed of RNF123/KPC1 and UBAC1/KPC2) and, in the nucleus, by SCF(SKP2). The latter requires prior phosphorylation on Thr-187. Ubiquitinated; by a TRIM21-containing SCF(SKP2)-like complex; leads to its degradation. Subject to degradation in the lysosome. Interaction with SNX6 promotes lysosomal degradation. Expressed in kidney (at protein level). Expressed in all tissues tested. Highest levels in skeletal muscle, lowest in liver and kidney.

Its subcellular location is the nucleus. It is found in the cytoplasm. The protein resides in the endosome. Its function is as follows. Important regulator of cell cycle progression. Inhibits the kinase activity of CDK2 bound to cyclin A, but has little inhibitory activity on CDK2 bound to SPDYA. Involved in G1 arrest. Potent inhibitor of cyclin E- and cyclin A-CDK2 complexes. Forms a complex with cyclin type D-CDK4 complexes and is involved in the assembly, stability, and modulation of CCND1-CDK4 complex activation. Acts either as an inhibitor or an activator of cyclin type D-CDK4 complexes depending on its phosphorylation state and/or stoichometry. This is Cyclin-dependent kinase inhibitor 1B from Homo sapiens (Human).